Reading from the N-terminus, the 478-residue chain is RNA pseudouridine synthase 3, mitochondrial (478 aa).

The transit peptide at 1–20 directs the protein to the mitochondrion; it reads MWKAKTCFRQIYLTVLIRRY. In terms of domain architecture, S4 RNA-binding spans 92 to 162; sequence EEIYDKAIQT…MRISKRYDTI (71 aa). Residue Asp232 is part of the active site.

The protein belongs to the pseudouridine synthase RluA family.

Its subcellular location is the mitochondrion. The enzyme catalyses a uridine in RNA = a pseudouridine in RNA. The sequence is that of RNA pseudouridine synthase 3, mitochondrial from Arabidopsis thaliana (Mouse-ear cress).